A 683-amino-acid chain; its full sequence is Long-chain fatty acid transport protein 3 (683 aa).

Residues 3 to 23 traverse the membrane as a helical segment; that stretch reads ALLLLPLLLLLPLLLLKLHLW. A compositionally biased stretch (gly residues) spans 119–128; the sequence is GGDSGEGSAG. Residues 119–145 form a disordered region; the sequence is GGDSGEGSAGEGERAAPGAGDAAAGSG. Positions 133–145 are enriched in low complexity; it reads AAPGAGDAAAGSG. Residues 288–292, histidine 331, threonine 428, aspartate 528, arginine 543, and lysine 635 each bind ATP; that span reads TSGTT.

The protein belongs to the ATP-dependent AMP-binding enzyme family. As to expression, expressed in bronchial and bronchiolar epithelial cells (at protein level).

The protein resides in the mitochondrion membrane. It carries out the reaction a fatty acid(in) = a fatty acid(out). The catalysed reaction is a long-chain fatty acid + ATP + CoA = a long-chain fatty acyl-CoA + AMP + diphosphate. The enzyme catalyses hexadecanoate + ATP + CoA = hexadecanoyl-CoA + AMP + diphosphate. It catalyses the reaction (9Z)-octadecenoate + ATP + CoA = (9Z)-octadecenoyl-CoA + AMP + diphosphate. It carries out the reaction (9Z,12Z)-octadecadienoate + ATP + CoA = (9Z,12Z)-octadecadienoyl-CoA + AMP + diphosphate. The catalysed reaction is (5Z,8Z,11Z,14Z)-eicosatetraenoate + ATP + CoA = (5Z,8Z,11Z,14Z)-eicosatetraenoyl-CoA + AMP + diphosphate. The enzyme catalyses a very long-chain fatty acid + ATP + CoA = a very long-chain fatty acyl-CoA + AMP + diphosphate. It catalyses the reaction tetracosanoate + ATP + CoA = tetracosanoyl-CoA + AMP + diphosphate. Mainly functions as an acyl-CoA ligase catalyzing the ATP-dependent formation of fatty acyl-CoA using LCFA and very-long-chain fatty acids (VLCFA) as substrates. Can mediate the levels of long-chain fatty acids (LCFA) in the cell by facilitating their transport across membranes. This chain is Long-chain fatty acid transport protein 3, found in Homo sapiens (Human).